We begin with the raw amino-acid sequence, 248 residues long: Putative eukaryotic initiation factor 4A-like protein (248 aa).

The Q motif signature appears at 14-42; sequence VGFASLGLNEQLINNIKRYGITKLTPFQM. One can recognise a Helicase ATP-binding domain in the interval 45–239; sequence IKEIKENSNV…NTFIKIPKII (195 aa). 58 to 65 lines the ATP pocket; the sequence is SIEGTGRT. The DEAD box motif lies at 185–188; that stretch reads DELD.

The protein belongs to the DEAD box helicase family. eIF4A subfamily.

The sequence is that of Putative eukaryotic initiation factor 4A-like protein from Dictyostelium discoideum (Social amoeba).